Consider the following 370-residue polypeptide: Queuine tRNA-ribosyltransferase (370 aa).

The Proton acceptor role is filled by Asp93. Substrate-binding positions include 93 to 97 (DSGGF), Asp147, Gln190, and Gly217. Residues 248 to 254 (GVGTPDY) form an RNA binding region. The active-site Nucleophile is Asp267. The RNA binding; important for wobble base 34 recognition stretch occupies residues 272-276 (TRVAR). Residues Cys305, Cys307, Cys310, and His336 each coordinate Zn(2+).

It belongs to the queuine tRNA-ribosyltransferase family. As to quaternary structure, homodimer. Within each dimer, one monomer is responsible for RNA recognition and catalysis, while the other monomer binds to the replacement base PreQ1. Requires Zn(2+) as cofactor.

It catalyses the reaction 7-aminomethyl-7-carbaguanine + guanosine(34) in tRNA = 7-aminomethyl-7-carbaguanosine(34) in tRNA + guanine. The protein operates within tRNA modification; tRNA-queuosine biosynthesis. In terms of biological role, catalyzes the base-exchange of a guanine (G) residue with the queuine precursor 7-aminomethyl-7-deazaguanine (PreQ1) at position 34 (anticodon wobble position) in tRNAs with GU(N) anticodons (tRNA-Asp, -Asn, -His and -Tyr). Catalysis occurs through a double-displacement mechanism. The nucleophile active site attacks the C1' of nucleotide 34 to detach the guanine base from the RNA, forming a covalent enzyme-RNA intermediate. The proton acceptor active site deprotonates the incoming PreQ1, allowing a nucleophilic attack on the C1' of the ribose to form the product. After dissociation, two additional enzymatic reactions on the tRNA convert PreQ1 to queuine (Q), resulting in the hypermodified nucleoside queuosine (7-(((4,5-cis-dihydroxy-2-cyclopenten-1-yl)amino)methyl)-7-deazaguanosine). This chain is Queuine tRNA-ribosyltransferase, found in Natranaerobius thermophilus (strain ATCC BAA-1301 / DSM 18059 / JW/NM-WN-LF).